Reading from the N-terminus, the 1470-residue chain is Guanine nucleotide exchange factor subunit R06F6.8 (1470 aa).

3 WD repeats span residues 20-58, 68-107, and 472-512; these read STAA…LLCS, ETRG…DEQC, and AYCS…VVGV. 4 disordered regions span residues 673 to 710, 975 to 1001, 1017 to 1045, and 1238 to 1259; these read QSQN…PMNQ, FFRT…ADSS, RLNK…SKDK, and RSPS…SPSS. A compositionally biased stretch (low complexity) spans 689–707; the sequence is SNVSIQSVSTSTTSEPSSP. Polar residues predominate over residues 983–1001; that stretch reads AKTSLSRRPTVSSPSADSS. Over residues 1028-1045 the composition is skewed to basic and acidic residues; it reads EQKDAPRKDSIGGSSKDK. The chain crosses the membrane as a helical span at residues 1294-1314; the sequence is LLLSLFSQTATIDWIFLFCLL. Basic and acidic residues predominate over residues 1385–1403; it reads SPDNENRKASQKTSADDPK. The tract at residues 1385–1447 is disordered; it reads SPDNENRKAS…SADRAHKSVK (63 aa). The span at 1411-1424 shows a compositional bias: polar residues; the sequence is SGSSKLNNSFSNPK. Residues 1431-1447 show a composition bias toward basic and acidic residues; that stretch reads GRRERSRSADRAHKSVK.

The protein belongs to the RIC1 family. Component of a guanine nucleotide exchange factor (GEF) complex.

The protein localises to the membrane. Functionally, probable component of a guanine nucleotide exchange factor (GEF) that may be required for efficient fusion of endosome-derived vesicles with the Golgi. This Caenorhabditis elegans protein is Guanine nucleotide exchange factor subunit R06F6.8.